We begin with the raw amino-acid sequence, 505 residues long: Probable cytosol aminopeptidase (505 aa).

Residues Lys269 and Asp274 each contribute to the Mn(2+) site. The active site involves Lys281. Mn(2+)-binding residues include Asp292, Asp351, and Glu353. Residue Arg355 is part of the active site.

It belongs to the peptidase M17 family. Mn(2+) serves as cofactor.

The protein localises to the cytoplasm. It catalyses the reaction Release of an N-terminal amino acid, Xaa-|-Yaa-, in which Xaa is preferably Leu, but may be other amino acids including Pro although not Arg or Lys, and Yaa may be Pro. Amino acid amides and methyl esters are also readily hydrolyzed, but rates on arylamides are exceedingly low.. The catalysed reaction is Release of an N-terminal amino acid, preferentially leucine, but not glutamic or aspartic acids.. In terms of biological role, presumably involved in the processing and regular turnover of intracellular proteins. Catalyzes the removal of unsubstituted N-terminal amino acids from various peptides. The polypeptide is Probable cytosol aminopeptidase (Rhodococcus jostii (strain RHA1)).